Reading from the N-terminus, the 466-residue chain is DNA polymerase delta subunit 3 (466 aa).

Ala-2 carries the N-acetylalanine modification. Disordered stretches follow at residues 169 to 188 and 199 to 232; these read NNELTTNGHGPPASKQVSQQ and KAAAKTQETNKETKTEAKEVTNASAAGNKAPGKG. The segment covering 206–217 has biased composition (basic and acidic residues); it reads ETNKETKTEAKE. Residue Lys-258 forms a Glycyl lysine isopeptide (Lys-Gly) (interchain with G-Cter in SUMO); alternate linkage. Lys-258 is covalently cross-linked (Glycyl lysine isopeptide (Lys-Gly) (interchain with G-Cter in SUMO2); alternate). A Glycyl lysine isopeptide (Lys-Gly) (interchain with G-Cter in SUMO2) cross-link involves residue Lys-261. 2 disordered regions span residues 274–393 and 406–466; these read KLAT…KTYL and ESES…FQRK. Thr-277 is modified (phosphothreonine). The segment covering 286-296 has biased composition (basic and acidic residues); sequence KKAEPVKVLQK. Ser-307 is modified (phosphoserine). Pro residues predominate over residues 349–361; the sequence is PSPPPPPSPPLEP. Residues Ser-407 and Ser-409 each carry the phosphoserine modification. Phosphothreonine is present on Thr-411. Ser-413 is modified (phosphoserine). Positions 432–441 are enriched in basic and acidic residues; the sequence is VKKEPREERK. A Glycyl lysine isopeptide (Lys-Gly) (interchain with G-Cter in SUMO); alternate cross-link involves residue Lys-433. Residue Lys-433 forms a Glycyl lysine isopeptide (Lys-Gly) (interchain with G-Cter in SUMO2); alternate linkage. Residues 455–466 are compositionally biased toward polar residues; sequence RQVSITGFFQRK. Positions 456–463 match the PIP-box motif; sequence QVSITGFF. The residue at position 458 (Ser-458) is a Phosphoserine.

Component of both the DNA polymerase delta and DNA polymerase zeta complexes. The tetrameric DNA polymerase delta complex (Pol-delta4), which consists of POLD1/p125, POLD2/p50, POLD3/p66/p68 and POLD4/p12, with POLD1 bearing DNA polymerase and 3' to 5' proofreading exonuclease activities. Within this complex, directly interacts with POLD2. Following stress caused by DNA damaging agents or by replication stress, POLD4 is degraded and Pol-delta4 is converted into a trimeric form of the complex (Pol-delta3), which consists of POLD1, POLD2 and POLD3. Pol-delta3 is the major form occurring at S phase replication sites, as well as DNA damage sites. Directly interacts with PCNA, as do POLD1 and POLD4; this interaction stimulates Pol-delta polymerase activity. POLD3 phosphorylation at Ser-458 impairs PCNA binding. Component of the DNA polymerase zeta complex (POLZ), which consists of REV3L, MAD2L2, POLD2 and POLD3, with REV3L bearing DNA polymerase catalytic activity. The DNA polymerase delta complex interacts with POLDIP2; this interaction is probably mediated through direct binding to POLD2. Post-translationally, ubiquitinated, but not targeted to the proteasome. Sumoylated. Sumoylation with SUMO3 may be predominant. In terms of processing, phosphorylation at Ser-458 is catalyzed in vitro by PKA. It is thought to decrease the affinity for PCNA and Pol-delta4 processivity. Can also be phosphorylated in vitro by CDK1-cyclin-A complex, as well as CDK2-cyclin-A and CDK2-cyclin-E complexes. PCNA interferes with CDK-cyclin phosphorylation.

It is found in the cytoplasm. The protein resides in the nucleus. Its function is as follows. Accessory component of both the DNA polymerase delta complex and the DNA polymerase zeta complex. As a component of the trimeric and tetrameric DNA polymerase delta complexes (Pol-delta3 and Pol-delta4, respectively), plays a role in high fidelity genome replication, including in lagging strand synthesis, and repair. Required for optimal Pol-delta activity. Stabilizes the Pol-delta complex and plays a major role in Pol-delta stimulation by PCNA. Pol-delta3 and Pol-delta4 are characterized by the absence or the presence of POLD4. They exhibit differences in catalytic activity. Most notably, Pol-delta3 shows higher proofreading activity than Pol-delta4. Although both Pol-delta3 and Pol-delta4 process Okazaki fragments in vitro, Pol-delta3 may also be better suited to fulfill this task, exhibiting near-absence of strand displacement activity compared to Pol-delta4 and stalling on encounter with the 5'-blocking oligonucleotides. Pol-delta3 idling process may avoid the formation of a gap, while maintaining a nick that can be readily ligated. Along with DNA polymerase kappa, DNA polymerase delta carries out approximately half of nucleotide excision repair (NER) synthesis following UV irradiation. In this context, POLD3, along with PCNA and RFC1-replication factor C complex, is required to recruit POLD1, the catalytic subunit of the polymerase delta complex, to DNA damage sites. Under conditions of DNA replication stress, required for the repair of broken replication forks through break-induced replication (BIR). Involved in the translesion synthesis (TLS) of templates carrying O6-methylguanine or abasic sites performed by Pol-delta4, independently of DNA polymerase zeta (REV3L) or eta (POLH). Facilitates abasic site bypass by DNA polymerase delta by promoting extension from the nucleotide inserted opposite the lesion. Also involved in TLS, as a component of the tetrameric DNA polymerase zeta complex. Along with POLD2, dramatically increases the efficiency and processivity of DNA synthesis of the DNA polymerase zeta complex compared to the minimal zeta complex, consisting of only REV3L and REV7. The protein is DNA polymerase delta subunit 3 (POLD3) of Homo sapiens (Human).